Consider the following 334-residue polypeptide: Hematopoietic SH2 domain-containing protein (334 aa).

The 92-residue stretch at Trp-34–Cys-125 folds into the SH2 domain. 2 disordered regions span residues Glu-157–Phe-181 and Glu-254–Arg-280. Positions Ala-258–Ala-267 are enriched in polar residues.

As to quaternary structure, interacts with FES and TNK2. May be phosphorylated by FES and ACK1. As to expression, predominantly expressed in spleen and thymus. Appears not to be expressed in heart, brain, liver, kidney, embryo, lung and ovary.

It is found in the cytoplasm. Its subcellular location is the mitochondrion. Its function is as follows. Adapter protein involved in tyrosine kinase and CD28 signaling. May be a modulator of the apoptotic response through its ability to affect mitochondrial stability. This chain is Hematopoietic SH2 domain-containing protein (Hsh2d), found in Mus musculus (Mouse).